The sequence spans 67 residues: Small ribosomal subunit protein eS31 (67 aa).

Zn(2+) contacts are provided by Cys31, Cys34, Cys49, and Cys52. Residues Cys31–Cys52 form a C4-type zinc finger.

Belongs to the eukaryotic ribosomal protein eS31 family. Part of the 30S ribosomal subunit. Requires Zn(2+) as cofactor.

This Methanococcus maripaludis (strain C5 / ATCC BAA-1333) protein is Small ribosomal subunit protein eS31.